A 161-amino-acid polypeptide reads, in one-letter code: Ribonuclease H (161 aa).

The RNase H type-1 domain occupies 11–152 (GPRPVVIHTD…ADQLARDGLT (142 aa)). The Mg(2+) site is built by Asp20, Glu58, Asp80, and Asp144. The tract at residues 137–161 (HDENERADQLARDGLTENRMKSRIG) is disordered.

This sequence belongs to the RNase H family. In terms of assembly, monomer. Mg(2+) serves as cofactor.

The protein resides in the cytoplasm. The enzyme catalyses Endonucleolytic cleavage to 5'-phosphomonoester.. Functionally, endonuclease that specifically degrades the RNA of RNA-DNA hybrids. The polypeptide is Ribonuclease H (Rhodopseudomonas palustris (strain HaA2)).